Here is a 758-residue protein sequence, read N- to C-terminus: 5-methyltetrahydropteroyltriglutamate--homocysteine methyltransferase (758 aa).

5-methyltetrahydropteroyltri-L-glutamate is bound by residues 16-19 (RELK) and Lys116. L-homocysteine-binding positions include 436-438 (IGS) and Glu489. L-methionine contacts are provided by residues 436–438 (IGS) and Glu489. Residues 520 to 521 (RC) and Trp566 each bind 5-methyltetrahydropteroyltri-L-glutamate. Position 604 (Asp604) interacts with L-homocysteine. Residue Asp604 participates in L-methionine binding. Glu610 contributes to the 5-methyltetrahydropteroyltri-L-glutamate binding site. 3 residues coordinate Zn(2+): His646, Cys648, and Glu670. His699 functions as the Proton donor in the catalytic mechanism. Residue Cys731 participates in Zn(2+) binding.

It belongs to the vitamin-B12 independent methionine synthase family. It depends on Zn(2+) as a cofactor.

The enzyme catalyses 5-methyltetrahydropteroyltri-L-glutamate + L-homocysteine = tetrahydropteroyltri-L-glutamate + L-methionine. The protein operates within amino-acid biosynthesis; L-methionine biosynthesis via de novo pathway; L-methionine from L-homocysteine (MetE route): step 1/1. Its function is as follows. Catalyzes the transfer of a methyl group from 5-methyltetrahydrofolate to homocysteine resulting in methionine formation. The chain is 5-methyltetrahydropteroyltriglutamate--homocysteine methyltransferase from Nitrosococcus oceani (strain ATCC 19707 / BCRC 17464 / JCM 30415 / NCIMB 11848 / C-107).